The primary structure comprises 493 residues: EGF-containing fibulin-like extracellular matrix protein 1 (493 aa).

The signal sequence occupies residues Met-1–Ser-17. Positions Tyr-26–Leu-71 constitute an EGF-like 1; atypical domain. Residues Asp-173–Val-213 form the EGF-like 2; calcium-binding domain. Cystine bridges form between Cys-177–Cys-190, Cys-184–Cys-199, Cys-201–Cys-212, Cys-218–Cys-228, Cys-224–Cys-237, Cys-239–Cys-252, Cys-258–Cys-268, Cys-264–Cys-277, Cys-279–Cys-292, Cys-298–Cys-309, Cys-305–Cys-318, Cys-320–Cys-332, Cys-338–Cys-350, Cys-344–Cys-359, and Cys-365–Cys-377. The 40-residue stretch at Asp-214–Val-253 folds into the EGF-like 3; calcium-binding domain. N-linked (GlcNAc...) asparagine glycosylation occurs at Asn-249. The EGF-like 4; calcium-binding domain occupies Asp-254–Glu-293. A mediates interaction with TIMP3 region spans residues Asp-259–Phe-493. In terms of domain architecture, EGF-like 5; calcium-binding spans Asp-294–Gln-333. Residues Asp-334 to Val-378 form the EGF-like 6; calcium-binding domain.

Belongs to the fibulin family. As to quaternary structure, interacts with ECM1. Interacts with TIMP3. As to expression, expressed by olfactory ensheathing cells (at protein level). Detected in lung, intestine and kidney.

It localises to the secreted. The protein localises to the extracellular space. The protein resides in the extracellular matrix. Functionally, binds EGFR, the EGF receptor, inducing EGFR autophosphorylation and the activation of downstream signaling pathways. May play a role in cell adhesion and migration. May function as a negative regulator of chondrocyte differentiation. In the olfactory epithelium, it may regulate glial cell migration, differentiation and the ability of glial cells to support neuronal neurite outgrowth. The sequence is that of EGF-containing fibulin-like extracellular matrix protein 1 (Efemp1) from Rattus norvegicus (Rat).